The following is a 556-amino-acid chain: Oxygen-dependent choline dehydrogenase (556 aa).

Residue 4–33 participates in FAD binding; the sequence is DYIIIGAGSAGNVLATRLTEDPNTSVLLLE. The active-site Proton acceptor is His473.

Belongs to the GMC oxidoreductase family. It depends on FAD as a cofactor.

It catalyses the reaction choline + A = betaine aldehyde + AH2. The catalysed reaction is betaine aldehyde + NAD(+) + H2O = glycine betaine + NADH + 2 H(+). It functions in the pathway amine and polyamine biosynthesis; betaine biosynthesis via choline pathway; betaine aldehyde from choline (cytochrome c reductase route): step 1/1. Involved in the biosynthesis of the osmoprotectant glycine betaine. Catalyzes the oxidation of choline to betaine aldehyde and betaine aldehyde to glycine betaine at the same rate. This Shigella flexneri serotype 5b (strain 8401) protein is Oxygen-dependent choline dehydrogenase.